The sequence spans 390 residues: Neutrophil cytosol factor 1 (390 aa).

A PX domain is found at 4 to 125; it reads TFIRHIALLG…DFFKVRPDDL (122 aa). SH3 domains follow at residues 156-215 and 226-285; these read IILQ…PLDS and YAGE…KSGQ. Residues 285 to 390 are disordered; sequence QDVSQAQRQI…STKRKLASAV (106 aa). Serine 303 and serine 304 each carry phosphoserine. Basic residues predominate over residues 309–318; sequence HSIHQRSRKR. Phosphoserine occurs at positions 320, 328, 345, and 348.

Component of the phagocyte NADPH oxidase complex composed of an obligatory core heterodimer formed by the membrane proteins CYBA and CYBB and the cytosolic regulatory subunits NCF1/p47-phox, NCF2/p67-phox, NCF4/p40-phox and the small GTPase RAC1 or RAC2. Part of a cytosolic complex composed at least by NCF1, NCF2 and NCF4. Interacts (via C-terminus) with NCF2 (via the C-terminal SH3 domain). Interacts with NCF4. Interacts with CYBB. Interacts (via the second SH3 domain) with CYBA; interaction is phosphorylation-dependent. Interacts with NOXA1. Interacts with ADAM15. Interacts with TRAF4. Interacts with FASLG. Interacts with PARK7 (via C-terminus); the interaction is enhanced by LPS and modulates NCF1 phosphorylation and membrane translocation. Phosphorylated by PRKCD; phosphorylation induces activation of NCF1, leading to assembly and activation of the NADPH oxidase complex. Detected in peripheral blood monocytes and neutrophils (at protein level).

It is found in the cytoplasm. Its subcellular location is the cytosol. The protein localises to the membrane. In terms of biological role, subunit of the phagocyte NADPH oxidase complex that mediates the transfer of electrons from cytosolic NADPH to O2 to produce the superoxide anion (O2(-)). In the activated complex, electrons are first transferred from NADPH to flavin adenine dinucleotide (FAD) and subsequently transferred via two heme molecules to molecular oxygen, producing superoxide through an outer-sphere reaction. Activation of the NADPH oxidase complex is initiated by the assembly of cytosolic subunits of the NADPH oxidase complex with the core NADPH oxidase complex to form a complex at the plasma membrane or phagosomal membrane. This activation process is initiated by phosphorylation dependent binding of the cytosolic NCF1/p47-phox subunit to the C-terminus of CYBA/p22-phox. This is Neutrophil cytosol factor 1 from Homo sapiens (Human).